Reading from the N-terminus, the 252-residue chain is 3-dehydroquinate dehydratase (252 aa).

Residues S21, 46 to 48 (EWR), and R82 contribute to the 3-dehydroquinate site. H143 serves as the catalytic Proton donor/acceptor. Residue K170 is the Schiff-base intermediate with substrate of the active site. 3-dehydroquinate is bound by residues R213, S232, and Q236.

This sequence belongs to the type-I 3-dehydroquinase family. In terms of assembly, homodimer.

The enzyme catalyses 3-dehydroquinate = 3-dehydroshikimate + H2O. It functions in the pathway metabolic intermediate biosynthesis; chorismate biosynthesis; chorismate from D-erythrose 4-phosphate and phosphoenolpyruvate: step 3/7. Its function is as follows. Involved in the third step of the chorismate pathway, which leads to the biosynthesis of aromatic amino acids. Catalyzes the cis-dehydration of 3-dehydroquinate (DHQ) and introduces the first double bond of the aromatic ring to yield 3-dehydroshikimate. The chain is 3-dehydroquinate dehydratase from Escherichia coli O9:H4 (strain HS).